The following is a 158-amino-acid chain: Ethylene-responsive transcription factor ERF120 (158 aa).

The segment at residues 86 to 147 (KHKGVRKKPS…SARRGTKNGE (62 aa)) is a DNA-binding region (AP2/ERF). Residues 134–158 (VGRRSARRGTKNGEEASTKKTTEKN) are disordered. The span at 144-158 (KNGEEASTKKTTEKN) shows a compositional bias: basic and acidic residues.

Belongs to the AP2/ERF transcription factor family. ERF subfamily.

It localises to the nucleus. In terms of biological role, probably acts as a transcriptional activator. Binds to the GCC-box pathogenesis-related promoter element. May be involved in the regulation of gene expression by stress factors and by components of stress signal transduction pathways. The polypeptide is Ethylene-responsive transcription factor ERF120 (ERF120) (Arabidopsis thaliana (Mouse-ear cress)).